The primary structure comprises 85 residues: Cell division topological specificity factor (85 aa).

Belongs to the MinE family.

Its function is as follows. Prevents the cell division inhibition by proteins MinC and MinD at internal division sites while permitting inhibition at polar sites. This ensures cell division at the proper site by restricting the formation of a division septum at the midpoint of the long axis of the cell. The polypeptide is Cell division topological specificity factor (Stutzerimonas stutzeri (strain A1501) (Pseudomonas stutzeri)).